Consider the following 461-residue polypeptide: Bifunctional protein GlmU (461 aa).

The tract at residues 1 to 232 (MNLQIIILAA…SFEVQGINNR (232 aa)) is pyrophosphorylase. UDP-N-acetyl-alpha-D-glucosamine is bound by residues 8-11 (LAAG), Lys22, Gln73, and 78-79 (GT). Mg(2+) is bound at residue Asp102. UDP-N-acetyl-alpha-D-glucosamine contacts are provided by Gly142, Glu157, and Asn230. Position 230 (Asn230) interacts with Mg(2+). Residues 233 to 253 (QQLQQLERIWQQRAANQLMEK) form a linker region. The segment at 254-461 (GATLADANRF…WKRPVKRERD (208 aa)) is N-acetyltransferase. Residues Arg336 and Lys354 each coordinate UDP-N-acetyl-alpha-D-glucosamine. His366 serves as the catalytic Proton acceptor. Tyr369 and Asn380 together coordinate UDP-N-acetyl-alpha-D-glucosamine. Acetyl-CoA contacts are provided by residues Ala383, 389–390 (NY), Ser408, and Ala426.

This sequence in the N-terminal section; belongs to the N-acetylglucosamine-1-phosphate uridyltransferase family. The protein in the C-terminal section; belongs to the transferase hexapeptide repeat family. Homotrimer. It depends on Mg(2+) as a cofactor.

The protein localises to the cytoplasm. It carries out the reaction alpha-D-glucosamine 1-phosphate + acetyl-CoA = N-acetyl-alpha-D-glucosamine 1-phosphate + CoA + H(+). It catalyses the reaction N-acetyl-alpha-D-glucosamine 1-phosphate + UTP + H(+) = UDP-N-acetyl-alpha-D-glucosamine + diphosphate. The protein operates within nucleotide-sugar biosynthesis; UDP-N-acetyl-alpha-D-glucosamine biosynthesis; N-acetyl-alpha-D-glucosamine 1-phosphate from alpha-D-glucosamine 6-phosphate (route II): step 2/2. It functions in the pathway nucleotide-sugar biosynthesis; UDP-N-acetyl-alpha-D-glucosamine biosynthesis; UDP-N-acetyl-alpha-D-glucosamine from N-acetyl-alpha-D-glucosamine 1-phosphate: step 1/1. It participates in bacterial outer membrane biogenesis; LPS lipid A biosynthesis. Its function is as follows. Catalyzes the last two sequential reactions in the de novo biosynthetic pathway for UDP-N-acetylglucosamine (UDP-GlcNAc). The C-terminal domain catalyzes the transfer of acetyl group from acetyl coenzyme A to glucosamine-1-phosphate (GlcN-1-P) to produce N-acetylglucosamine-1-phosphate (GlcNAc-1-P), which is converted into UDP-GlcNAc by the transfer of uridine 5-monophosphate (from uridine 5-triphosphate), a reaction catalyzed by the N-terminal domain. The chain is Bifunctional protein GlmU from Legionella pneumophila (strain Corby).